We begin with the raw amino-acid sequence, 276 residues long: Hydroxycinnamoyl-CoA hydratase-lyase (276 aa).

Acetyl-CoA-binding residues include K29, A68, M70, and L72. Y75 contacts vanillin. Acetyl-CoA-binding residues include G120, S142, and W146. Residues G151 and Y239 each contribute to the vanillin site.

Belongs to the enoyl-CoA hydratase/isomerase family. As to quaternary structure, homohexamer; dimer of trimers.

It catalyses the reaction (E)-feruloyl-CoA + H2O = vanillin + acetyl-CoA. The catalysed reaction is (E)-caffeoyl-CoA + H2O = 3,4-dihydroxybenzaldehyde + acetyl-CoA. The enzyme catalyses (E)-4-coumaroyl-CoA + H2O = 4-hydroxybenzaldehyde + acetyl-CoA. It carries out the reaction (E)-feruloyl-CoA + H2O = 3-hydroxy-3-(4-hydroxy-3-methoxyphenyl)propanoyl-CoA. It catalyses the reaction 3-hydroxy-3-(4-hydroxy-3-methoxyphenyl)propanoyl-CoA = vanillin + acetyl-CoA. The catalysed reaction is (E)-caffeoyl-CoA + H2O = 3-hydroxy-3-(3,4-dihydroxyphenyl)propanoyl-CoA. The enzyme catalyses 3-hydroxy-3-(3,4-dihydroxyphenyl)propanoyl-CoA = 3,4-dihydroxybenzaldehyde + acetyl-CoA. It carries out the reaction (E)-4-coumaroyl-CoA + H2O = 3-hydroxy-3-(4-hydroxyphenyl)propanoyl-CoA. It catalyses the reaction 3-hydroxy-3-(4-hydroxyphenyl)propanoyl-CoA = 4-hydroxybenzaldehyde + acetyl-CoA. Functionally, catalyzes the hydration of the acyl-CoA thioester of ferulic acid and the subsequent retro-aldol cleavage of the hydrated intermediate to yield vanillin (4-hydroxy-3-methoxy-benzaldehyde). The enzyme is also active with caffeoyl-CoA and 4-coumaroyl-CoA producing 3,4-dihydroxybenzaldehyde and 4-hydroxybenzaldehyde, respectively. In Pseudomonas fluorescens, this protein is Hydroxycinnamoyl-CoA hydratase-lyase.